A 129-amino-acid polypeptide reads, in one-letter code: Larval/pupal rigid cuticle protein 66 (129 aa).

A signal peptide spans 1-17 (MLVKFVACFVFVAVASA). A Chitin-binding type R&amp;R domain is found at 18–90 (SDFSSFSYGV…ALIAAAPYIT (73 aa)).

Expressed in larval wing disc, forewing disc, diapausing wing, adult wing, and in very low amounts in fat body and testes.

Functionally, component of the rigid cuticle of the larva and pupa of Hyalophora cecropia. The chain is Larval/pupal rigid cuticle protein 66 (CP66) from Hyalophora cecropia (Cecropia moth).